The chain runs to 517 residues: Glucans biosynthesis protein G (517 aa).

Residues 1 to 28 (MKHKLQMMKMRWLSAAVMLTLYTSSSWA) form the signal peptide.

Belongs to the OpgD/OpgG family.

It is found in the periplasm. Its pathway is glycan metabolism; osmoregulated periplasmic glucan (OPG) biosynthesis. Involved in the biosynthesis of osmoregulated periplasmic glucans (OPGs). This is Glucans biosynthesis protein G from Escherichia coli O1:K1 / APEC.